The primary structure comprises 524 residues: Anthranilate synthase component 1 (524 aa).

L-tryptophan-binding positions include S55 and 297–299; that span reads PYM. Position 332-333 (332-333) interacts with chorismate; it reads GT. E359 contributes to the Mg(2+) binding site. Chorismate-binding positions include Y447, R467, 485-487, and G487; that span reads GAG. Mg(2+) is bound at residue E500.

It belongs to the anthranilate synthase component I family. Heterotetramer consisting of two non-identical subunits: a beta subunit (TrpG) and a large alpha subunit (TrpE). The cofactor is Mg(2+).

It catalyses the reaction chorismate + L-glutamine = anthranilate + pyruvate + L-glutamate + H(+). Its pathway is amino-acid biosynthesis; L-tryptophan biosynthesis; L-tryptophan from chorismate: step 1/5. Its activity is regulated as follows. Feedback inhibited by tryptophan. Functionally, part of a heterotetrameric complex that catalyzes the two-step biosynthesis of anthranilate, an intermediate in the biosynthesis of L-tryptophan. In the first step, the glutamine-binding beta subunit (TrpG) of anthranilate synthase (AS) provides the glutamine amidotransferase activity which generates ammonia as a substrate that, along with chorismate, is used in the second step, catalyzed by the large alpha subunit of AS (TrpE) to produce anthranilate. In the absence of TrpG, TrpE can synthesize anthranilate directly from chorismate and high concentrations of ammonia. The protein is Anthranilate synthase component 1 (trpE) of Haloferax volcanii (strain ATCC 29605 / DSM 3757 / JCM 8879 / NBRC 14742 / NCIMB 2012 / VKM B-1768 / DS2) (Halobacterium volcanii).